The following is a 559-amino-acid chain: Membrane protein insertase YidC (559 aa).

A helical membrane pass occupies residues 6 to 26 (TVLWMIFSFSLLLLWNNWQIH). The disordered stretch occupies residues 34 to 80 (GGPSPEQNAPATANNQAATNPASNTPAVPNAPAATSAPSSVPGSTAP). Residues 42–80 (APATANNQAATNPASNTPAVPNAPAATSAPSSVPGSTAP) are compositionally biased toward low complexity. A run of 4 helical transmembrane segments spans residues 367 to 387 (LLGNWGWTIVALTVIIKAVFY), 441 to 461 (LPMVVQIPVFIALYWVLLASV), 480 to 500 (PYFILPAVMMATMFLQIKLNP), and 510 to 530 (VMMVMPLVFGGMMFFFPAGLV).

Belongs to the OXA1/ALB3/YidC family. Type 1 subfamily. In terms of assembly, interacts with the Sec translocase complex via SecD. Specifically interacts with transmembrane segments of nascent integral membrane proteins during membrane integration.

The protein resides in the cell inner membrane. In terms of biological role, required for the insertion and/or proper folding and/or complex formation of integral membrane proteins into the membrane. Involved in integration of membrane proteins that insert both dependently and independently of the Sec translocase complex, as well as at least some lipoproteins. Aids folding of multispanning membrane proteins. The polypeptide is Membrane protein insertase YidC (Bordetella avium (strain 197N)).